The sequence spans 585 residues: Proline--tRNA ligase (585 aa).

Belongs to the class-II aminoacyl-tRNA synthetase family. ProS type 1 subfamily. As to quaternary structure, homodimer.

It is found in the cytoplasm. The enzyme catalyses tRNA(Pro) + L-proline + ATP = L-prolyl-tRNA(Pro) + AMP + diphosphate. Functionally, catalyzes the attachment of proline to tRNA(Pro) in a two-step reaction: proline is first activated by ATP to form Pro-AMP and then transferred to the acceptor end of tRNA(Pro). As ProRS can inadvertently accommodate and process non-cognate amino acids such as alanine and cysteine, to avoid such errors it has two additional distinct editing activities against alanine. One activity is designated as 'pretransfer' editing and involves the tRNA(Pro)-independent hydrolysis of activated Ala-AMP. The other activity is designated 'posttransfer' editing and involves deacylation of mischarged Ala-tRNA(Pro). The misacylated Cys-tRNA(Pro) is not edited by ProRS. In Corynebacterium diphtheriae (strain ATCC 700971 / NCTC 13129 / Biotype gravis), this protein is Proline--tRNA ligase.